We begin with the raw amino-acid sequence, 367 residues long: Histidinol-phosphate aminotransferase 1 (367 aa).

Residue lysine 226 is modified to N6-(pyridoxal phosphate)lysine.

It belongs to the class-II pyridoxal-phosphate-dependent aminotransferase family. Histidinol-phosphate aminotransferase subfamily. Homodimer. It depends on pyridoxal 5'-phosphate as a cofactor.

It catalyses the reaction L-histidinol phosphate + 2-oxoglutarate = 3-(imidazol-4-yl)-2-oxopropyl phosphate + L-glutamate. The protein operates within amino-acid biosynthesis; L-histidine biosynthesis; L-histidine from 5-phospho-alpha-D-ribose 1-diphosphate: step 7/9. This chain is Histidinol-phosphate aminotransferase 1 (hisC1), found in Haemophilus influenzae (strain ATCC 51907 / DSM 11121 / KW20 / Rd).